Here is a 538-residue protein sequence, read N- to C-terminus: Chaperonin GroEL (538 aa).

Residues 29-32 (TIGP), 86-90 (DGTTT), G413, 476-478 (NAA), and D492 contribute to the ATP site.

Belongs to the chaperonin (HSP60) family. Forms a cylinder of 14 subunits composed of two heptameric rings stacked back-to-back. Interacts with the co-chaperonin GroES.

It is found in the cytoplasm. The catalysed reaction is ATP + H2O + a folded polypeptide = ADP + phosphate + an unfolded polypeptide.. Functionally, together with its co-chaperonin GroES, plays an essential role in assisting protein folding. The GroEL-GroES system forms a nano-cage that allows encapsulation of the non-native substrate proteins and provides a physical environment optimized to promote and accelerate protein folding. In Staphylococcus aureus (strain Mu3 / ATCC 700698), this protein is Chaperonin GroEL.